Consider the following 79-residue polypeptide: Sec-independent protein translocase protein TatA (79 aa).

A helical membrane pass occupies residues 1–21 (MGGFTSIWHWVIVLLVIVLLF). Positions 48–79 (EEEAKNEPKTLDAQATQTKVHESSEIKSKQES) are disordered. The segment covering 66–79 (KVHESSEIKSKQES) has biased composition (basic and acidic residues).

This sequence belongs to the TatA/E family. The Tat system comprises two distinct complexes: a TatABC complex, containing multiple copies of TatA, TatB and TatC subunits, and a separate TatA complex, containing only TatA subunits. Substrates initially bind to the TatABC complex, which probably triggers association of the separate TatA complex to form the active translocon.

Its subcellular location is the cell inner membrane. Part of the twin-arginine translocation (Tat) system that transports large folded proteins containing a characteristic twin-arginine motif in their signal peptide across membranes. TatA could form the protein-conducting channel of the Tat system. The protein is Sec-independent protein translocase protein TatA of Helicobacter pylori (strain ATCC 700392 / 26695) (Campylobacter pylori).